We begin with the raw amino-acid sequence, 147 residues long: UPF0047 protein sll1880 (147 aa).

This sequence belongs to the UPF0047 family.

The chain is UPF0047 protein sll1880 from Synechocystis sp. (strain ATCC 27184 / PCC 6803 / Kazusa).